The following is a 609-amino-acid chain: UvrABC system protein C (609 aa).

The 79-residue stretch at 16 to 94 (SSAGVYRMYD…IKQYMPKYNV (79 aa)) folds into the GIY-YIG domain. In terms of domain architecture, UVR spans 203–238 (KQVISELVAKMEEAAGQQAYEQAARFRDQIMALRRV).

Belongs to the UvrC family. Interacts with UvrB in an incision complex.

It localises to the cytoplasm. In terms of biological role, the UvrABC repair system catalyzes the recognition and processing of DNA lesions. UvrC both incises the 5' and 3' sides of the lesion. The N-terminal half is responsible for the 3' incision and the C-terminal half is responsible for the 5' incision. The chain is UvrABC system protein C from Shewanella sp. (strain ANA-3).